A 71-amino-acid polypeptide reads, in one-letter code: MSQNSITSYKMGFAKHFFLFAVLLCATAMYSVAEPAQERLIESIACMQKGLPCMEHVDCCHGVCDSLFCLY.

The first 33 residues, 1 to 33 (MSQNSITSYKMGFAKHFFLFAVLLCATAMYSVA), serve as a signal peptide directing secretion. A propeptide spanning residues 34–39 (EPAQER) is cleaved from the precursor. 3 disulfide bridges follow: cysteine 46/cysteine 60, cysteine 53/cysteine 64, and cysteine 59/cysteine 69.

Expressed by the venom gland.

Its subcellular location is the secreted. Functionally, probable insect neurotoxin with ion channel impairing activity. Does not show activity on 45 human receptors from 9 families (5-hydroxytryptamine, adrenergic, dopamine, muscarinic, histamine, neurotransmitter, opioid, sigma, and gaba(A) receptors). In vivo, when mixed with U3-SYTX-Sth1a does not cause paralytic or lethal activity when injected into crickets. It is noteworthy that crickets are evolutionarily distant from prey species. This Scytodes thoracica (Spitting spider) protein is U3-scytotoxin-Sth1h.